We begin with the raw amino-acid sequence, 115 residues long: Large ribosomal subunit protein bL19 (115 aa).

This sequence belongs to the bacterial ribosomal protein bL19 family.

This protein is located at the 30S-50S ribosomal subunit interface and may play a role in the structure and function of the aminoacyl-tRNA binding site. The polypeptide is Large ribosomal subunit protein bL19 (Lawsonia intracellularis (strain PHE/MN1-00)).